Reading from the N-terminus, the 362-residue chain is UDP-N-acetylglucosamine--N-acetylmuramyl-(pentapeptide) pyrophosphoryl-undecaprenol N-acetylglucosamine transferase (362 aa).

UDP-N-acetyl-alpha-D-glucosamine is bound by residues 10-12 (TAG), N124, R161, S195, and Q291.

Belongs to the glycosyltransferase 28 family. MurG subfamily.

Its subcellular location is the cell membrane. The enzyme catalyses di-trans,octa-cis-undecaprenyl diphospho-N-acetyl-alpha-D-muramoyl-L-alanyl-D-glutamyl-meso-2,6-diaminopimeloyl-D-alanyl-D-alanine + UDP-N-acetyl-alpha-D-glucosamine = di-trans,octa-cis-undecaprenyl diphospho-[N-acetyl-alpha-D-glucosaminyl-(1-&gt;4)]-N-acetyl-alpha-D-muramoyl-L-alanyl-D-glutamyl-meso-2,6-diaminopimeloyl-D-alanyl-D-alanine + UDP + H(+). It functions in the pathway cell wall biogenesis; peptidoglycan biosynthesis. Cell wall formation. Catalyzes the transfer of a GlcNAc subunit on undecaprenyl-pyrophosphoryl-MurNAc-pentapeptide (lipid intermediate I) to form undecaprenyl-pyrophosphoryl-MurNAc-(pentapeptide)GlcNAc (lipid intermediate II). The polypeptide is UDP-N-acetylglucosamine--N-acetylmuramyl-(pentapeptide) pyrophosphoryl-undecaprenol N-acetylglucosamine transferase (Streptomyces collinus).